A 609-amino-acid chain; its full sequence is Dihydroxy-acid dehydratase (609 aa).

Aspartate 82 contacts Mg(2+). [2Fe-2S] cluster is bound at residue cysteine 123. Residues aspartate 124 and lysine 125 each contribute to the Mg(2+) site. Residue lysine 125 is modified to N6-carboxylysine. Position 192 (cysteine 192) interacts with [2Fe-2S] cluster. Glutamate 489 contributes to the Mg(2+) binding site. Serine 515 (proton acceptor) is an active-site residue.

This sequence belongs to the IlvD/Edd family. As to quaternary structure, homodimer. It depends on [2Fe-2S] cluster as a cofactor. Mg(2+) serves as cofactor.

It carries out the reaction (2R)-2,3-dihydroxy-3-methylbutanoate = 3-methyl-2-oxobutanoate + H2O. The enzyme catalyses (2R,3R)-2,3-dihydroxy-3-methylpentanoate = (S)-3-methyl-2-oxopentanoate + H2O. Its pathway is amino-acid biosynthesis; L-isoleucine biosynthesis; L-isoleucine from 2-oxobutanoate: step 3/4. It functions in the pathway amino-acid biosynthesis; L-valine biosynthesis; L-valine from pyruvate: step 3/4. In terms of biological role, functions in the biosynthesis of branched-chain amino acids. Catalyzes the dehydration of (2R,3R)-2,3-dihydroxy-3-methylpentanoate (2,3-dihydroxy-3-methylvalerate) into 2-oxo-3-methylpentanoate (2-oxo-3-methylvalerate) and of (2R)-2,3-dihydroxy-3-methylbutanoate (2,3-dihydroxyisovalerate) into 2-oxo-3-methylbutanoate (2-oxoisovalerate), the penultimate precursor to L-isoleucine and L-valine, respectively. In Azobacteroides pseudotrichonymphae genomovar. CFP2, this protein is Dihydroxy-acid dehydratase.